A 476-amino-acid chain; its full sequence is Cytochrome c oxidase subunit 1 (476 aa).

A helical transmembrane segment spans residues 19-39 (LYYLWFSFLFGTYGFLLSVIL). Position 42 (Glu42) interacts with Ca(2+). The next 8 membrane-spanning stretches (helical) occupy residues 61–81 (MIFT…GLFG), 105–125 (ISLL…AAEF), 144–164 (LSPV…IASI), 194–214 (IIIT…GVLM), 240–260 (LFWF…FGVI), 278–298 (MILA…HHMY), 309–329 (FFTS…FNWL), and 345–365 (LLCL…VILG). Residue His66 coordinates Fe(II)-heme a. His246 serves as a coordination point for Cu cation. The segment at residues 246–250 (HPEVY) is a cross-link (1'-histidyl-3'-tyrosine (His-Tyr)). Residue Tyr250 coordinates O2. Residues His295 and His296 each contribute to the Cu cation site. The Mg(2+) site is built by His374 and Asp375. Helical transmembrane passes span 379 to 399 (VIAH…FTCV) and 415 to 435 (TLIV…FLPM). His382 provides a ligand contact to heme a3. His384 lines the Fe(II)-heme a pocket. Pro448 lines the Ca(2+) pocket. The helical transmembrane segment at 455-475 (NGWNMICSIGSTMTLFGLLIF) threads the bilayer.

Belongs to the heme-copper respiratory oxidase family. Component of the cytochrome c oxidase (complex IV, CIV), a multisubunit enzyme composed of a catalytic core of 3 subunits and several supernumerary subunits. The complex exists as a monomer or a dimer and forms supercomplexes (SCs) in the inner mitochondrial membrane with ubiquinol-cytochrome c oxidoreductase (cytochrome b-c1 complex, complex III, CIII). The cofactor is heme. Cu cation is required as a cofactor.

It is found in the mitochondrion inner membrane. The catalysed reaction is 4 Fe(II)-[cytochrome c] + O2 + 8 H(+)(in) = 4 Fe(III)-[cytochrome c] + 2 H2O + 4 H(+)(out). It functions in the pathway energy metabolism; oxidative phosphorylation. Component of the cytochrome c oxidase, the last enzyme in the mitochondrial electron transport chain which drives oxidative phosphorylation. The respiratory chain contains 3 multisubunit complexes succinate dehydrogenase (complex II, CII), ubiquinol-cytochrome c oxidoreductase (cytochrome b-c1 complex, complex III, CIII) and cytochrome c oxidase (complex IV, CIV), that cooperate to transfer electrons derived from NADH and succinate to molecular oxygen, creating an electrochemical gradient over the inner membrane that drives transmembrane transport and the ATP synthase. Cytochrome c oxidase is the component of the respiratory chain that catalyzes the reduction of oxygen to water. Electrons originating from reduced cytochrome c in the intermembrane space (IMS) are transferred via the dinuclear copper A center (CU(A)) of subunit 2 and heme A of subunit 1 to the active site in subunit 1, a binuclear center (BNC) formed by heme A3 and copper B (CU(B)). The BNC reduces molecular oxygen to 2 water molecules using 4 electrons from cytochrome c in the IMS and 4 protons from the mitochondrial matrix. The protein is Cytochrome c oxidase subunit 1 (COI) of Plasmodium berghei.